A 271-amino-acid chain; its full sequence is 4-hydroxy-tetrahydrodipicolinate reductase (271 aa).

NAD(+) contacts are provided by residues 10–15 (GAGGRM), Glu-36, 100–102 (GTT), and 124–127 (SGNM). The active-site Proton donor/acceptor is His-157. His-158 contributes to the (S)-2,3,4,5-tetrahydrodipicolinate binding site. The Proton donor role is filled by Lys-161. 167–168 (GT) is a binding site for (S)-2,3,4,5-tetrahydrodipicolinate.

This sequence belongs to the DapB family.

It localises to the cytoplasm. It catalyses the reaction (S)-2,3,4,5-tetrahydrodipicolinate + NAD(+) + H2O = (2S,4S)-4-hydroxy-2,3,4,5-tetrahydrodipicolinate + NADH + H(+). The enzyme catalyses (S)-2,3,4,5-tetrahydrodipicolinate + NADP(+) + H2O = (2S,4S)-4-hydroxy-2,3,4,5-tetrahydrodipicolinate + NADPH + H(+). Its pathway is amino-acid biosynthesis; L-lysine biosynthesis via DAP pathway; (S)-tetrahydrodipicolinate from L-aspartate: step 4/4. Its function is as follows. Catalyzes the conversion of 4-hydroxy-tetrahydrodipicolinate (HTPA) to tetrahydrodipicolinate. The protein is 4-hydroxy-tetrahydrodipicolinate reductase of Rhodopseudomonas palustris (strain ATCC BAA-98 / CGA009).